The sequence spans 143 residues: 6,7-dimethyl-8-ribityllumazine synthase (143 aa).

5-amino-6-(D-ribitylamino)uracil-binding positions include F13, 45–47 (TFD), and 69–71 (CVI). Residue 74 to 75 (ET) participates in (2S)-2-hydroxy-3-oxobutyl phosphate binding. H77 functions as the Proton donor in the catalytic mechanism. Residue L102 coordinates 5-amino-6-(D-ribitylamino)uracil. R117 serves as a coordination point for (2S)-2-hydroxy-3-oxobutyl phosphate.

This sequence belongs to the DMRL synthase family.

It catalyses the reaction (2S)-2-hydroxy-3-oxobutyl phosphate + 5-amino-6-(D-ribitylamino)uracil = 6,7-dimethyl-8-(1-D-ribityl)lumazine + phosphate + 2 H2O + H(+). It participates in cofactor biosynthesis; riboflavin biosynthesis; riboflavin from 2-hydroxy-3-oxobutyl phosphate and 5-amino-6-(D-ribitylamino)uracil: step 1/2. Functionally, catalyzes the formation of 6,7-dimethyl-8-ribityllumazine by condensation of 5-amino-6-(D-ribitylamino)uracil with 3,4-dihydroxy-2-butanone 4-phosphate. This is the penultimate step in the biosynthesis of riboflavin. This chain is 6,7-dimethyl-8-ribityllumazine synthase, found in Archaeoglobus fulgidus (strain ATCC 49558 / DSM 4304 / JCM 9628 / NBRC 100126 / VC-16).